The chain runs to 425 residues: Enolase (425 aa).

A (2R)-2-phosphoglycerate-binding site is contributed by glutamine 162. Glutamate 204 (proton donor) is an active-site residue. Mg(2+) is bound by residues aspartate 241, glutamate 282, and aspartate 309. The (2R)-2-phosphoglycerate site is built by lysine 334, arginine 363, serine 364, and lysine 385. Lysine 334 acts as the Proton acceptor in catalysis.

It belongs to the enolase family. Requires Mg(2+) as cofactor.

Its subcellular location is the cytoplasm. It localises to the secreted. The protein resides in the cell surface. It catalyses the reaction (2R)-2-phosphoglycerate = phosphoenolpyruvate + H2O. The protein operates within carbohydrate degradation; glycolysis; pyruvate from D-glyceraldehyde 3-phosphate: step 4/5. In terms of biological role, catalyzes the reversible conversion of 2-phosphoglycerate (2-PG) into phosphoenolpyruvate (PEP). It is essential for the degradation of carbohydrates via glycolysis. In Micrococcus luteus (strain ATCC 4698 / DSM 20030 / JCM 1464 / CCM 169 / CCUG 5858 / IAM 1056 / NBRC 3333 / NCIMB 9278 / NCTC 2665 / VKM Ac-2230) (Micrococcus lysodeikticus), this protein is Enolase.